Here is a 396-residue protein sequence, read N- to C-terminus: Elongation factor Tu (396 aa).

The region spanning 10–206 is the tr-type G domain; it reads KEHVNIGTIG…AVDTWIETPV (197 aa). The G1 stretch occupies residues 19–26; it reads GHVDHGKT. Residue 19–26 participates in GTP binding; sequence GHVDHGKT. Thr26 contributes to the Mg(2+) binding site. The G2 stretch occupies residues 60 to 64; sequence GITIN. Positions 81–84 are G3; the sequence is DCPG. Residues 81 to 85 and 136 to 139 each bind GTP; these read DCPGH and NKCD. The interval 136-139 is G4; the sequence is NKCD. Residues 176–178 form a G5 region; the sequence is SAL.

This sequence belongs to the TRAFAC class translation factor GTPase superfamily. Classic translation factor GTPase family. EF-Tu/EF-1A subfamily. In terms of assembly, monomer.

The protein localises to the cytoplasm. It catalyses the reaction GTP + H2O = GDP + phosphate + H(+). Functionally, GTP hydrolase that promotes the GTP-dependent binding of aminoacyl-tRNA to the A-site of ribosomes during protein biosynthesis. The chain is Elongation factor Tu from Mycoplasmopsis agalactiae (strain NCTC 10123 / CIP 59.7 / PG2) (Mycoplasma agalactiae).